Reading from the N-terminus, the 103-residue chain is uncharacterized protein (103 aa).

The first 22 residues, 1–22, serve as a signal peptide directing secretion; that stretch reads MFRPFLNSLMLGSLFFPFIAIA.

The protein to the N-terminal of the FimA/PapA family of fimbria proteins.

This is an uncharacterized protein from Escherichia coli (strain K12).